Consider the following 623-residue polypeptide: Negative regulator of PDR1-mediated fluconazole resistance JJJ1 (623 aa).

In terms of domain architecture, J spans 4-70; the sequence is CYYDLLEVRS…QERAWYDSHK (67 aa). A C2H2-type zinc finger spans residues 363–387; sequence YDCFICKKSFKSEKQLENHIKTKLH. Disordered regions lie at residues 448–476, 499–581, and 599–623; these read QSSVTDSEDFTDDNNDTEDQNSLVDKLSN, GADN…NDAK, and SHIQTEGHVSPLSKVKKGKRSKKNK. Residues 453–466 are compositionally biased toward acidic residues; it reads DSEDFTDDNNDTED. Positions 499-508 are enriched in polar residues; it reads GADNSETQNA. Over residues 525 to 538 the composition is skewed to basic and acidic residues; it reads ELTRILRELEESKT. 2 stretches are compositionally biased toward basic residues: residues 553-564 and 612-623; these read KKKTKAKKKKNK and KVKKGKRSKKNK.

The protein localises to the nucleus. Acts as a negative regulator of fluconazole resistance, primarily through down-regulation of the ABC transporter gene CDR1 via inactivation of the PDR1 transcriptional pathway. This is Negative regulator of PDR1-mediated fluconazole resistance JJJ1 from Candida glabrata (strain ATCC 2001 / BCRC 20586 / JCM 3761 / NBRC 0622 / NRRL Y-65 / CBS 138) (Yeast).